A 630-amino-acid polypeptide reads, in one-letter code: tRNA uridine 5-carboxymethylaminomethyl modification enzyme MnmG (630 aa).

Residues 13 to 18, valine 125, and serine 180 contribute to the FAD site; that span reads GGGHAG. 273–287 lines the NAD(+) pocket; that stretch reads GPRYCPSIEDKIHRF. Glutamine 370 serves as a coordination point for FAD.

Belongs to the MnmG family. Homodimer. Heterotetramer of two MnmE and two MnmG subunits. It depends on FAD as a cofactor.

It localises to the cytoplasm. NAD-binding protein involved in the addition of a carboxymethylaminomethyl (cmnm) group at the wobble position (U34) of certain tRNAs, forming tRNA-cmnm(5)s(2)U34. The protein is tRNA uridine 5-carboxymethylaminomethyl modification enzyme MnmG of Shewanella woodyi (strain ATCC 51908 / MS32).